Reading from the N-terminus, the 29-residue chain is HSQGSFTSDYSKYLDSKQAKDFVIWLMNT.

This sequence belongs to the glucagon family.

It is found in the secreted. Its function is as follows. Glucagon plays a key role in glucose metabolism and homeostasis. Regulates blood glucose by increasing gluconeogenesis and decreasing glycolysis. This Lampetra fluviatilis (European river lamprey) protein is Glucagon (gcg).